We begin with the raw amino-acid sequence, 604 residues long: Prostaglandin G/H synthase 2 (604 aa).

The N-terminal stretch at 1-17 (MLFRAVLLCAALGLSQA) is a signal peptide. The EGF-like domain occupies 18–55 (ANPCCSNPCQNRGECMSTGFDQYKCDCTRTGFYGENCT). Cystine bridges form between Cys-21-Cys-32, Cys-22-Cys-145, Cys-26-Cys-42, and Cys-44-Cys-54. The N-linked (GlcNAc...) asparagine glycan is linked to Asn-53. A substrate-binding site is contributed by Arg-106. Asn-130 is a glycosylation site (N-linked (GlcNAc...) asparagine). The active-site Proton acceptor is the His-193. Tyr-341 contacts substrate. Tyr-371 acts as the For cyclooxygenase activity in catalysis. His-374 serves as a coordination point for heme b. N-linked (GlcNAc...) asparagine glycosylation is present at Asn-396. Cys-526 is subject to S-nitrosocysteine. Cysteines 555 and 561 form a disulfide. Ser-565 bears the O-acetylserine; by SPHK1 mark. A glycan (N-linked (GlcNAc...) asparagine) is linked at Asn-580.

Belongs to the prostaglandin G/H synthase family. Homodimer. It depends on heme b as a cofactor. Post-translationally, S-nitrosylation by NOS2 (iNOS) activates enzyme activity. S-nitrosylation may take place on different Cys residues in addition to Cys-526. Acetylated at Ser-565 by SPHK1. During neuroinflammation, acetylation by SPHK1 promotes neuronal secretion of specialized preresolving mediators (SPMs), especially 15-R-lipoxin A4, which results in an increase of phagocytic microglia. Following colon injury, expressed in the wound bed mesenchyme during the first phase of repair, probably by colonic mesenchymal stem cells (at protein level).

The protein resides in the microsome membrane. It is found in the endoplasmic reticulum membrane. Its subcellular location is the nucleus inner membrane. It localises to the nucleus outer membrane. It carries out the reaction (5Z,8Z,11Z,14Z)-eicosatetraenoate + AH2 + 2 O2 = prostaglandin H2 + A + H2O. The catalysed reaction is (5Z,8Z,11Z,14Z)-eicosatetraenoate + 2 O2 = prostaglandin G2. It catalyses the reaction prostaglandin G2 + AH2 = prostaglandin H2 + A + H2O. The enzyme catalyses (5Z,8Z,11Z,14Z,17Z)-eicosapentaenoate + 2 O2 = prostaglandin G3. It carries out the reaction prostaglandin G3 + AH2 = prostaglandin H3 + A + H2O. The catalysed reaction is (8Z,11Z,14Z)-eicosatrienoate + 2 O2 = prostaglandin G1. It catalyses the reaction prostaglandin G1 + AH2 = prostaglandin H1 + A + H2O. The enzyme catalyses 2-(5Z,8Z,11Z,14Z)-eicosatetraenoyl-sn-glycero-3-phosphoethanolamine + 2 O2 = 2-(prostaglandin G2)-sn-glycero-3-phosphoethanolamine. It carries out the reaction 2-(prostaglandin G2)-sn-glycero-3-phosphoethanolamine + AH2 = 2-(prostaglandin H2)-sn-glycero-3-phosphoethanolamine + A + H2O. The catalysed reaction is 2-(5Z,8Z,11Z,14Z)-eicosatetraenoyl-sn-glycero-3-phosphocholine + 2 O2 = 2-(prostaglandin G2)-sn-glycero-3-phosphocholine. It catalyses the reaction 2-(prostaglandin G2)-sn-glycero-3-phosphocholine + AH2 = 2-(prostaglandin H2)-sn-glycero-3-phosphocholine + A + H2O. The enzyme catalyses (15S)-hydroperoxy-(5Z,8Z,11Z,13E)-eicosatetraenoate + AH2 = (15S)-hydroxy-(5Z,8Z,11Z,13E)-eicosatetraenoate + A + H2O. It carries out the reaction 2-(5Z,8Z,11Z,14Z)-eicosatetraenoyl-sn-glycero-3-phosphocholine + AH2 + O2 = 2-[(15S)-hydroxy-(5Z,8Z,11Z,13E)-eicosatetraenoyl]-sn-glycero-3-phosphocholine + A + H2O. The catalysed reaction is 2-(5Z,8Z,11Z,14Z)-eicosatetraenoyl-sn-glycero-3-phosphocholine + AH2 + O2 = 2-[(15R)-hydroxy-(5Z,8Z,11Z,13E)-eicosatetraenoyl]-sn-glycero-3-phosphocholine + A + H2O. It catalyses the reaction 2-(5Z,8Z,11Z,14Z)-eicosatetraenoyl-sn-glycero-3-phosphocholine + AH2 + O2 = 2-[(11R)-hydroxy-(5Z,8Z,12E,14Z)-eicosatetraenoyl]-sn-glycero-3-phosphocholine + A + H2O. The enzyme catalyses (9Z,12Z)-octadecadienoate + AH2 + O2 = 9-hydroxy-(10E,12Z)-octadecadienoate + A + H2O. It carries out the reaction (9Z,12Z)-octadecadienoate + AH2 + O2 = 13-hydroxy-(9Z,11E)-octadecadienoate + A + H2O. The catalysed reaction is (5Z,8Z,11Z,14Z)-eicosatetraenoate + AH2 + O2 = (15R)-hydroxy-(5Z,8Z,11Z,13E)-eicosatetraenoate + A + H2O. It catalyses the reaction (5Z,8Z,11Z,14Z)-eicosatetraenoate + AH2 + O2 = (11R)-hydroxy-(5Z,8Z,12E,14Z)-eicosatetraenoate + A + H2O. The enzyme catalyses (5Z,8Z,11Z,14Z,17Z)-eicosapentaenoate + AH2 + O2 = (11R)-hydroxy-(5Z,8Z,12E,14Z,17Z)-eicosapentaenoate + A + H2O. It carries out the reaction (5Z,8Z,11Z,14Z,17Z)-eicosapentaenoate + AH2 + O2 = (18S)-hydroxy-(5Z,8Z,11Z,14Z,16E)-eicosapentaenoate + A + H2O. The catalysed reaction is (5Z,8Z,11Z,14Z,17Z)-eicosapentaenoate + AH2 + O2 = (18R)-hydroxy-(5Z,8Z,11Z,14Z,16E)-eicosapentaenoate + A + H2O. It catalyses the reaction (5Z,8Z,11Z,14Z,17Z)-eicosapentaenoate + AH2 + O2 = (15R)-hydroxy-(5Z,8Z,11Z,13E,17Z)-eicosapentaenoate + A + H2O. The enzyme catalyses (5Z,8Z,11Z,14Z,17Z)-eicosapentaenoate + AH2 + O2 = (15S)-hydroxy-(5Z,8Z,11Z,13E,17Z)-eicosapentaenoate + A + H2O. It carries out the reaction (7Z,10Z,13Z,16Z,19Z)-docosapentaenoate + AH2 + O2 = 13R-hydroxy-(7Z,10Z,14E,16Z,19Z)-docosapentaenoate + A + H2O. The catalysed reaction is (4Z,7Z,10Z,13Z,16Z,19Z)-docosahexaenoate + AH2 + O2 = 13-hydroxy-(4Z,7Z,10Z,14E,16Z,19Z)-docosahexaenoate + A + H2O. It catalyses the reaction (5S)-hydroxy-(6E,8Z,11Z,14Z)-eicosatetraenoate + AH2 + O2 = (5S,15R)-dihydroxy-(6E,8Z,11Z,13E)-eicosatetraenoate + A + H2O. The enzyme catalyses (4Z,7Z,10Z,13Z,16Z,19Z)-docosahexaenoate + AH2 + O2 = 17R-hydroxy-(4Z,7Z,10Z,13Z,15E,19Z)-docosahexaenoate + A + H2O. It carries out the reaction (5S)-hydroxy-(6E,8Z,11Z,14Z)-eicosatetraenoate + AH2 + O2 = (5S,15S)-dihydroxy-(6E,8Z,11Z,13E)-eicosatetraenoate + A + H2O. The catalysed reaction is (5S)-hydroxy-(6E,8Z,11Z,14Z)-eicosatetraenoate + AH2 + O2 = (5S,11R)-dihydroxy-(6E,8Z,12E,14Z)-eicosatetraenoate + A + H2O. It catalyses the reaction 2-(5Z,8Z,11Z,14Z-eicosatetraenoyl)-glycerol + 2 O2 = 2-glyceryl-prostaglandin G2. The enzyme catalyses 2-glyceryl-prostaglandin G2 + AH2 = 2-glyceryl-prostaglandin H2 + A + H2O. It carries out the reaction (5Z,8Z,11Z,14Z)-eicosatetraenoate + O2 = (15R)-hydroperoxy-(5Z,8Z,11Z,13E)-eicosatetraenoate. The catalysed reaction is (5Z,8Z,11Z,14Z)-eicosatetraenoate + O2 = 11R-hydroperoxy-(5Z,8Z,12E,14Z)-eicosatetraenoate. It catalyses the reaction (9Z,12Z)-octadecadienoate + AH2 + O2 = (9R)-hydroxy-(10E,12Z)-octadecadienoate + A + H2O. The enzyme catalyses (9Z,12Z)-octadecadienoate + AH2 + O2 = (9S)-hydroxy-(10E,12Z)-octadecadienoate + A + H2O. It carries out the reaction (9Z,12Z)-octadecadienoate + AH2 + O2 = (13S)-hydroxy-(9Z,11E)-octadecadienoate + A + H2O. The catalysed reaction is (9Z,12Z)-octadecadienoate + AH2 + O2 = (13R)-hydroxy-(9Z,11E)-octadecadienoate + A + H2O. It functions in the pathway lipid metabolism; prostaglandin biosynthesis. With respect to regulation, inhibited by the nonsteroidal anti-inflammatory drugs aspirin, naproxen, diclofenac, meclofenamic acid, indomethacin and their analogs. In terms of biological role, dual cyclooxygenase and peroxidase in the biosynthesis pathway of prostanoids, a class of C20 oxylipins mainly derived from arachidonate, with a particular role in the inflammatory response. The cyclooxygenase activity oxygenates arachidonate (AA, C20:4(n-6)) to the hydroperoxy endoperoxide prostaglandin G2 (PGG2), and the peroxidase activity reduces PGG2 to the hydroxy endoperoxide PGH2, the precursor of all 2-series prostaglandins and thromboxanes. This complex transformation is initiated by abstraction of hydrogen at carbon 13 (with S-stereochemistry), followed by insertion of molecular O2 to form the endoperoxide bridge between carbon 9 and 11 that defines prostaglandins. The insertion of a second molecule of O2 (bis-oxygenase activity) yields a hydroperoxy group in PGG2 that is then reduced to PGH2 by two electrons. Similarly catalyzes successive cyclooxygenation and peroxidation of dihomo-gamma-linoleate (DGLA, C20:3(n-6)) and eicosapentaenoate (EPA, C20:5(n-3)) to corresponding PGH1 and PGH3, the precursors of 1- and 3-series prostaglandins. In an alternative pathway of prostanoid biosynthesis, converts 2-arachidonoyl lysophopholipids to prostanoid lysophopholipids, which are then hydrolyzed by intracellular phospholipases to release free prostanoids. Metabolizes 2-arachidonoyl glycerol yielding the glyceryl ester of PGH2, a process that can contribute to pain response. Generates lipid mediators from n-3 and n-6 polyunsaturated fatty acids (PUFAs) via a lipoxygenase-type mechanism. Oxygenates PUFAs to hydroperoxy compounds and then reduces them to corresponding alcohols. Plays a role in the generation of resolution phase interaction products (resolvins) during both sterile and infectious inflammation. Metabolizes docosahexaenoate (DHA, C22:6(n-3)) to 17R-HDHA, a precursor of the D-series resolvins (RvDs). As a component of the biosynthetic pathway of E-series resolvins (RvEs), converts eicosapentaenoate (EPA, C20:5(n-3)) primarily to 18S-HEPE that is further metabolized by ALOX5 and LTA4H to generate 18S-RvE1 and 18S-RvE2. In vascular endothelial cells, converts docosapentaenoate (DPA, C22:5(n-3)) to 13R-HDPA, a precursor for 13-series resolvins (RvTs) shown to activate macrophage phagocytosis during bacterial infection. In activated leukocytes, contributes to oxygenation of hydroxyeicosatetraenoates (HETE) to diHETES (5,15-diHETE and 5,11-diHETE). Can also use linoleate (LA, (9Z,12Z)-octadecadienoate, C18:2(n-6)) as substrate and produce hydroxyoctadecadienoates (HODEs) in a regio- and stereospecific manner, being (9R)-HODE ((9R)-hydroxy-(10E,12Z)-octadecadienoate) and (13S)-HODE ((13S)-hydroxy-(9Z,11E)-octadecadienoate) its major products. During neuroinflammation, plays a role in neuronal secretion of specialized preresolving mediators (SPMs) 15R-lipoxin A4 that regulates phagocytic microglia. This Mus musculus (Mouse) protein is Prostaglandin G/H synthase 2.